The chain runs to 226 residues: 7-cyano-7-deazaguanine synthase (226 aa).

ATP is bound at residue 7-17 (ISGGMDSLVTT). Positions 187, 195, 198, and 201 each coordinate Zn(2+).

It belongs to the QueC family. The cofactor is Zn(2+).

The catalysed reaction is 7-carboxy-7-deazaguanine + NH4(+) + ATP = 7-cyano-7-deazaguanine + ADP + phosphate + H2O + H(+). Its pathway is purine metabolism; 7-cyano-7-deazaguanine biosynthesis. Functionally, catalyzes the ATP-dependent conversion of 7-carboxy-7-deazaguanine (CDG) to 7-cyano-7-deazaguanine (preQ(0)). In Chlorobium limicola (strain DSM 245 / NBRC 103803 / 6330), this protein is 7-cyano-7-deazaguanine synthase.